The primary structure comprises 217 residues: NAD(P)H-hydrate epimerase (217 aa).

A YjeF N-terminal domain is found at Met-1 to Ser-217. Asn-48–Asp-52 provides a ligand contact to (6S)-NADPHX. Positions 49 and 127 each coordinate K(+). (6S)-NADPHX is bound by residues Gly-131–Pro-137 and Asp-165. Thr-168 provides a ligand contact to K(+).

The protein belongs to the NnrE/AIBP family. Requires K(+) as cofactor.

It carries out the reaction (6R)-NADHX = (6S)-NADHX. The catalysed reaction is (6R)-NADPHX = (6S)-NADPHX. Functionally, catalyzes the epimerization of the S- and R-forms of NAD(P)HX, a damaged form of NAD(P)H that is a result of enzymatic or heat-dependent hydration. This is a prerequisite for the S-specific NAD(P)H-hydrate dehydratase to allow the repair of both epimers of NAD(P)HX. The polypeptide is NAD(P)H-hydrate epimerase (Cereibacter sphaeroides (strain KD131 / KCTC 12085) (Rhodobacter sphaeroides)).